A 152-amino-acid chain; its full sequence is Protein ripply3 (152 aa).

Positions 1–24 are enriched in basic and acidic residues; sequence MRPEAAGVREARGRLCHCPGDDPG. Disordered regions lie at residues 1-76 and 113-152; these read MRPE…GAFG and FYNDDSESGSEEEQEEEAQPNHLQCLEAEVRDSAQEERAE. The short motif at 40–43 is the WRPW motif element; that stretch reads WRPW. Residues 79-114 form a ripply homology domain region; that stretch reads HPVRLYLPVSKRQEYLQSSGEKVLASFPVQATIHFY. A compositionally biased stretch (acidic residues) spans 116–130; sequence DDSESGSEEEQEEEA. Over residues 140-152 the composition is skewed to basic and acidic residues; sequence AEVRDSAQEERAE.

It belongs to the ripply family. As to quaternary structure, interacts with TBX1.

The protein resides in the nucleus. In terms of biological role, acts as a transcriptional corepressor. Negative regulator of the transcriptional activity of TBX1. Plays a role in the development of the pharyngeal apparatus and derivatives. The polypeptide is Protein ripply3 (Ripply3) (Mus musculus (Mouse)).